The chain runs to 353 residues: Deoxyribonuclease-2-alpha (353 aa).

A signal peptide spans 1–19 (MATLRSLLLAALLWVPAEA). C22 and C161 are oxidised to a cystine. N-linked (GlcNAc...) asparagine glycans are attached at residues N71, N88, N214, and N268. Cystine bridges form between C269–C349 and C310–C329. The active site involves H297.

It belongs to the DNase II family. In terms of tissue distribution, highly expressed in fetal liver macrophages.

The protein localises to the lysosome. It carries out the reaction Endonucleolytic cleavage to nucleoside 3'-phosphates and 3'-phosphooligonucleotide end-products.. Its function is as follows. Hydrolyzes DNA under acidic conditions with a preference for double-stranded DNA. Plays a major role in the clearance of nucleic acids generated through apoptosis, hence preventing autoinflammation. Necessary for proper fetal development and for definitive erythropoiesis in fetal liver and bone marrow, where it degrades nuclear DNA expelled from erythroid precursor cells. The sequence is that of Deoxyribonuclease-2-alpha (Dnase2) from Mus musculus (Mouse).